The following is an 808-amino-acid chain: Sucrose synthase 1 (808 aa).

A GT-B glycosyltransferase region spans residues 277–754; it reads MVFNVVILSP…GLQRIEEKYT (478 aa).

Belongs to the glycosyltransferase 1 family. Plant sucrose synthase subfamily. Homotetramer. In terms of tissue distribution, expressed in the phloem of leaves and in roots. Detected in the whole plant but more precisely confined to the vasculature in cotyledons, mature leaves and siliques.

It carries out the reaction an NDP-alpha-D-glucose + D-fructose = a ribonucleoside 5'-diphosphate + sucrose + H(+). Sucrose-cleaving enzyme that provides UDP-glucose and fructose for various metabolic pathways. This is Sucrose synthase 1 (SUS1) from Arabidopsis thaliana (Mouse-ear cress).